We begin with the raw amino-acid sequence, 156 residues long: uncharacterized protein (156 aa).

To L.lactis TrpF C-terminal region.

This is an uncharacterized protein from Bacillus subtilis (strain 168).